The primary structure comprises 91 residues: Non-structural protein 3a (91 aa).

Residues 1 to 19 (MVSFNATAILLLLLANAFS) form the signal peptide.

The chain is Non-structural protein 3a from Tylonycteris pachypus (Lesser bamboo bat).